An 83-amino-acid chain; its full sequence is MNPIISAASVIAAGLSVGLAAIGPGIGQGSAAGQALEGIARQPEAEGKIRGTLLLSLAFMEALTIYGLVVALSLLFANPFTAS.

A run of 2 helical transmembrane segments spans residues 3-23 and 57-77; these read PIIS…AAIG and LAFM…LLFA.

The protein belongs to the ATPase C chain family. In terms of assembly, F-type ATPases have 2 components, F(1) - the catalytic core - and F(0) - the membrane proton channel. F(1) has five subunits: alpha(3), beta(3), gamma(1), delta(1), epsilon(1). F(0) has four main subunits: a(1), b(1), b'(1) and c(10-14). The alpha and beta chains form an alternating ring which encloses part of the gamma chain. F(1) is attached to F(0) by a central stalk formed by the gamma and epsilon chains, while a peripheral stalk is formed by the delta, b and b' chains.

It localises to the plastid. The protein localises to the chloroplast thylakoid membrane. In terms of biological role, f(1)F(0) ATP synthase produces ATP from ADP in the presence of a proton or sodium gradient. F-type ATPases consist of two structural domains, F(1) containing the extramembraneous catalytic core and F(0) containing the membrane proton channel, linked together by a central stalk and a peripheral stalk. During catalysis, ATP synthesis in the catalytic domain of F(1) is coupled via a rotary mechanism of the central stalk subunits to proton translocation. Functionally, key component of the F(0) channel; it plays a direct role in translocation across the membrane. A homomeric c-ring of between 10-14 subunits forms the central stalk rotor element with the F(1) delta and epsilon subunits. This chain is ATP synthase subunit c, chloroplastic, found in Diacronema lutheri (Unicellular marine alga).